A 156-amino-acid polypeptide reads, in one-letter code: Ribonuclease pancreatic (156 aa).

The first 28 residues, 1–28 (MALEKSLVLLPLLVLILLVLGWVQPSLG), serve as a signal peptide directing secretion. The span at 33-43 (AKKFQRQHMDS) shows a compositional bias: basic and acidic residues. Residues 33–52 (AKKFQRQHMDSDSSPSSNST) form a disordered region. The substrate site is built by lysine 35 and arginine 38. The active-site Proton acceptor is histidine 40. 2 N-linked (GlcNAc...) asparagine glycosylation sites follow: asparagine 50 and asparagine 62. Disulfide bonds link cysteine 54–cysteine 112, cysteine 68–cysteine 123, cysteine 86–cysteine 138, and cysteine 93–cysteine 100. Substrate is bound by residues 69–73 (KPVNT) and lysine 94. Asparagine 104 carries an N-linked (GlcNAc...) asparagine glycan. Arginine 113 lines the substrate pocket. The N-linked (GlcNAc...) asparagine glycan is linked to asparagine 116. Histidine 147 serves as the catalytic Proton donor.

It belongs to the pancreatic ribonuclease family. As to quaternary structure, monomer. Interacts with and forms tight 1:1 complexes with RNH1. Dimerization of two such complexes may occur. Interaction with RNH1 inhibits this protein.

Its subcellular location is the secreted. It catalyses the reaction an [RNA] containing cytidine + H2O = an [RNA]-3'-cytidine-3'-phosphate + a 5'-hydroxy-ribonucleotide-3'-[RNA].. The catalysed reaction is an [RNA] containing uridine + H2O = an [RNA]-3'-uridine-3'-phosphate + a 5'-hydroxy-ribonucleotide-3'-[RNA].. Endonuclease that catalyzes the cleavage of RNA on the 3' side of pyrimidine nucleotides. Acts on single-stranded and double-stranded RNA. The protein is Ribonuclease pancreatic (RNASE1) of Gorilla gorilla gorilla (Western lowland gorilla).